Consider the following 339-residue polypeptide: MRVYYDRDADVNLIKGKKVAVVGYGSQGHAHVLNLRDSGVTEVCVALREGSPSAKKATGQGLVVKTPAEAAAWADVVMILTPDELQGDLYKDHLHANMKQGAALAFAHGLNIHFALIEPRPDLDVFMIAPKGPGHTVRSEYVRGGGVPCLVAVAQDASGNAMEIALSYASAIGGGRSGIIETTFREECETDLFGEQAVLCGGLTELIKNGFETLVEAGYAPEMAYFECLHEVKLIVDLMYEGGMANMRYSISNTAEYGDYVTGPRIVTPETKAEMKRVLDDIQSGRFVRDWMIECKAGQPSFKATRRRNAEHQIEEVGGRLRAMMPWIAANRLVDKDKN.

The region spanning Met-1–Thr-182 is the KARI N-terminal Rossmann domain. NADP(+)-binding positions include Tyr-24 to Gln-27, Arg-48, Ser-51, Ser-53, and Asp-83 to Gln-86. His-108 is an active-site residue. Gly-134 serves as a coordination point for NADP(+). The region spanning Thr-183–Ile-328 is the KARI C-terminal knotted domain. 4 residues coordinate Mg(2+): Asp-191, Glu-195, Glu-227, and Glu-231. Ser-252 serves as a coordination point for substrate.

It belongs to the ketol-acid reductoisomerase family. The cofactor is Mg(2+).

It catalyses the reaction (2R)-2,3-dihydroxy-3-methylbutanoate + NADP(+) = (2S)-2-acetolactate + NADPH + H(+). It carries out the reaction (2R,3R)-2,3-dihydroxy-3-methylpentanoate + NADP(+) = (S)-2-ethyl-2-hydroxy-3-oxobutanoate + NADPH + H(+). It functions in the pathway amino-acid biosynthesis; L-isoleucine biosynthesis; L-isoleucine from 2-oxobutanoate: step 2/4. Its pathway is amino-acid biosynthesis; L-valine biosynthesis; L-valine from pyruvate: step 2/4. Its function is as follows. Involved in the biosynthesis of branched-chain amino acids (BCAA). Catalyzes an alkyl-migration followed by a ketol-acid reduction of (S)-2-acetolactate (S2AL) to yield (R)-2,3-dihydroxy-isovalerate. In the isomerase reaction, S2AL is rearranged via a Mg-dependent methyl migration to produce 3-hydroxy-3-methyl-2-ketobutyrate (HMKB). In the reductase reaction, this 2-ketoacid undergoes a metal-dependent reduction by NADPH to yield (R)-2,3-dihydroxy-isovalerate. This is Ketol-acid reductoisomerase (NADP(+)) from Rhodospirillum rubrum (strain ATCC 11170 / ATH 1.1.1 / DSM 467 / LMG 4362 / NCIMB 8255 / S1).